Reading from the N-terminus, the 210-residue chain is Glutathione S-transferase P (210 aa).

One can recognise a GST N-terminal domain in the interval 2–81 (PPYTIVYFPV…HLGRSLGLYG (80 aa)). Tyrosine 4 carries the phosphotyrosine; by EGFR modification. Residues tyrosine 8, arginine 14, tryptophan 39, lysine 45, and 52-53 (QL) each bind glutathione. A Phosphothreonine modification is found at threonine 62. 65–66 (QS) serves as a coordination point for glutathione. One can recognise a GST C-terminal domain in the interval 83–204 (DQKEAALVDM…SSPDHLNRPI (122 aa)). An N6-succinyllysine mark is found at lysine 103 and lysine 116. The residue at position 128 (lysine 128) is an N6-acetyllysine.

This sequence belongs to the GST superfamily. Pi family. In terms of assembly, homodimer. Interacts with CDK5. Present in kidney, lung, testis and placenta, very low levels in liver.

The protein localises to the cytoplasm. Its subcellular location is the mitochondrion. It is found in the nucleus. It catalyses the reaction RX + glutathione = an S-substituted glutathione + a halide anion + H(+). The catalysed reaction is prostaglandin J2 + glutathione = prostaglandin J2-S-(R)-glutathione. The enzyme catalyses prostaglandin J2 + glutathione = prostaglandin J2-S-(S)-glutathione. It carries out the reaction prostaglandin A2 + glutathione = prostaglandin A2-S-(S)-glutathione. It catalyses the reaction 11(S)-hydroxy-14(S),15(S)-epoxy-(5Z,8Z,12E)-eicosatrienoate + glutathione = (11S,15S)-dihydroxy-14(R)-S-glutathionyl-(5Z,8Z,12E)-eicosatrienoate. Functionally, conjugation of reduced glutathione to a wide number of exogenous and endogenous hydrophobic electrophiles. Involved in the formation of glutathione conjugates of both prostaglandin A2 (PGA2) and prostaglandin J2 (PGJ2). Participates in the formation of novel hepoxilin regioisomers. Negatively regulates CDK5 activity via p25/p35 translocation to prevent neurodegeneration. This chain is Glutathione S-transferase P, found in Rattus norvegicus (Rat).